The primary structure comprises 97 residues: Large ribosomal subunit protein uL23 (97 aa).

This sequence belongs to the universal ribosomal protein uL23 family. In terms of assembly, part of the 50S ribosomal subunit. Contacts protein L29, and trigger factor when it is bound to the ribosome.

In terms of biological role, one of the early assembly proteins it binds 23S rRNA. One of the proteins that surrounds the polypeptide exit tunnel on the outside of the ribosome. Forms the main docking site for trigger factor binding to the ribosome. This Methylococcus capsulatus (strain ATCC 33009 / NCIMB 11132 / Bath) protein is Large ribosomal subunit protein uL23.